The following is a 497-amino-acid chain: Bifunctional protein GlmU (497 aa).

The segment at 1–241 (MSPETIGPAA…RWQVEGANDR (241 aa)) is pyrophosphorylase. Residues 14–17 (LAAG), K28, Q81, 86–87 (GT), 112–114 (YGD), G151, E166, N181, and N239 contribute to the UDP-N-acetyl-alpha-D-glucosamine site. D114 is a binding site for Mg(2+). N239 contributes to the Mg(2+) binding site. Residues 242–262 (IQLSALAAEHNRRIIESWMRA) form a linker region. The segment at 263-497 (GVTVVDPATT…QATIEEGKQA (235 aa)) is N-acetyltransferase. UDP-N-acetyl-alpha-D-glucosamine-binding residues include R344 and K362. H374 (proton acceptor) is an active-site residue. Residues Y377 and N388 each coordinate UDP-N-acetyl-alpha-D-glucosamine. Residues 397–398 (NY), S416, and A434 each bind acetyl-CoA.

The protein in the N-terminal section; belongs to the N-acetylglucosamine-1-phosphate uridyltransferase family. In the C-terminal section; belongs to the transferase hexapeptide repeat family. Homotrimer. The cofactor is Mg(2+).

Its subcellular location is the cytoplasm. It carries out the reaction alpha-D-glucosamine 1-phosphate + acetyl-CoA = N-acetyl-alpha-D-glucosamine 1-phosphate + CoA + H(+). It catalyses the reaction N-acetyl-alpha-D-glucosamine 1-phosphate + UTP + H(+) = UDP-N-acetyl-alpha-D-glucosamine + diphosphate. The protein operates within nucleotide-sugar biosynthesis; UDP-N-acetyl-alpha-D-glucosamine biosynthesis; N-acetyl-alpha-D-glucosamine 1-phosphate from alpha-D-glucosamine 6-phosphate (route II): step 2/2. It functions in the pathway nucleotide-sugar biosynthesis; UDP-N-acetyl-alpha-D-glucosamine biosynthesis; UDP-N-acetyl-alpha-D-glucosamine from N-acetyl-alpha-D-glucosamine 1-phosphate: step 1/1. Its pathway is bacterial outer membrane biogenesis; LPS lipid A biosynthesis. Functionally, catalyzes the last two sequential reactions in the de novo biosynthetic pathway for UDP-N-acetylglucosamine (UDP-GlcNAc). The C-terminal domain catalyzes the transfer of acetyl group from acetyl coenzyme A to glucosamine-1-phosphate (GlcN-1-P) to produce N-acetylglucosamine-1-phosphate (GlcNAc-1-P), which is converted into UDP-GlcNAc by the transfer of uridine 5-monophosphate (from uridine 5-triphosphate), a reaction catalyzed by the N-terminal domain. This is Bifunctional protein GlmU from Paenarthrobacter aurescens (strain TC1).